The chain runs to 448 residues: Probable glycine dehydrogenase (decarboxylating) subunit 1 (448 aa).

It belongs to the GcvP family. N-terminal subunit subfamily. As to quaternary structure, the glycine cleavage system is composed of four proteins: P, T, L and H. In this organism, the P 'protein' is a heterodimer of two subunits.

It catalyses the reaction N(6)-[(R)-lipoyl]-L-lysyl-[glycine-cleavage complex H protein] + glycine + H(+) = N(6)-[(R)-S(8)-aminomethyldihydrolipoyl]-L-lysyl-[glycine-cleavage complex H protein] + CO2. Functionally, the glycine cleavage system catalyzes the degradation of glycine. The P protein binds the alpha-amino group of glycine through its pyridoxal phosphate cofactor; CO(2) is released and the remaining methylamine moiety is then transferred to the lipoamide cofactor of the H protein. This is Probable glycine dehydrogenase (decarboxylating) subunit 1 from Caulobacter vibrioides (strain ATCC 19089 / CIP 103742 / CB 15) (Caulobacter crescentus).